Reading from the N-terminus, the 177-residue chain is Voltage-dependent L-type calcium channel subunit alpha-1C (177 aa).

Residues 27–45 (ITFFRLFRVMRLVKLLSRG) traverse the membrane as a helical segment. Residues 64–84 (YVALLIVMLFFIYAVIGMQVF) traverse the membrane as a helical segment. N-linked (GlcNAc...) asparagine glycosylation is present at N90. An intramembrane region (pore-forming) is located at residues 107–125 (AVLLLFRCATGEAWQEIML). A Selectivity filter of repeat IV motif is present at residues 116–119 (TGEA). Cysteines 133 and 149 form a disulfide. N141 carries N-linked (GlcNAc...) asparagine glycosylation. Residues 154–177 (AVFYFISFYMLCAFLIIDLFVAVI) form a helical membrane-spanning segment.

Belongs to the calcium channel alpha-1 subunit (TC 1.A.1.11) family. CACNA1C subfamily. In terms of assembly, component of a calcium channel complex consisting of a pore-forming alpha subunit (CACNA1C) and ancillary beta, gamma and delta subunits. The channel complex contains alpha, beta, gamma and delta subunits in a 1:1:1:1 ratio, i.e. it contains only one of each type of subunit. CACNA1C channel activity is modulated by ancillary subunits, such as CACNB2, CACNB3, CACNA2D1 and CACNA2D4. Post-translationally, phosphorylation by PKA activates the channel.

The protein resides in the cell membrane. It localises to the perikaryon. Its subcellular location is the postsynaptic density membrane. The protein localises to the cell projection. It is found in the dendrite. The protein resides in the sarcolemma. It localises to the T-tubule. The enzyme catalyses Ca(2+)(in) = Ca(2+)(out). Inhibited by dihydropyridines (DHP), such as isradipine. Channel activity is regulated by Ca(2+) and calmodulin. Functionally, pore-forming, alpha-1C subunit of the voltage-gated calcium channel that gives rise to L-type calcium currents. Mediates influx of calcium ions into the cytoplasm, and thereby triggers calcium release from the sarcoplasm. Plays an important role in excitation-contraction coupling in the heart. Required for normal heart development and normal regulation of heart rhythm. Required for normal contraction of smooth muscle cells in blood vessels and in the intestine. Essential for normal blood pressure regulation via its role in the contraction of arterial smooth muscle cells. Long-lasting (L-type) calcium channels belong to the 'high-voltage activated' (HVA) group. The sequence is that of Voltage-dependent L-type calcium channel subunit alpha-1C (CACNA1C) from Gallus gallus (Chicken).